Here is a 407-residue protein sequence, read N- to C-terminus: 41 kDa spicule matrix protein (407 aa).

Residues 1–17 form the signal peptide; it reads MKGVLFIVASLVAFATG. The C-type lectin domain maps to 29–160; sequence SGQSCYRYFN…PGRAPVMKRQ (132 aa). 2 disordered regions span residues 143–176 and 204–407; these read PQNP…IPQG and IGQQ…DALA. Over residues 223–369 the composition is skewed to gly residues; sequence NQPGMGGRQP…MGGRQPGMGG (147 aa). Residues 370 to 398 are compositionally biased toward low complexity; it reads QQPNNPNNPNNPNNPNNPNNPNPRFNRPR.

It belongs to the SM50 family. In terms of tissue distribution, expressed specifically in the micromere/primary mesenchyme cells (PMC) lineage.

It is found in the secreted. Its function is as follows. Major matrix protein of the sea urchin embryo spicule which directs crystal growth in certain orientations and inhibit growth in others. This chain is 41 kDa spicule matrix protein, found in Hemicentrotus pulcherrimus (Sea urchin).